The primary structure comprises 695 residues: Probable serine/threonine-protein kinase abkD (695 aa).

Residues 105–119 are compositionally biased toward polar residues; that stretch reads TTKPQPCQAKPPSSK. Residues 105–149 are disordered; that stretch reads TTKPQPCQAKPPSSKQQQQQQQQQQQQQQQQQQQQSKKKTSKDRL. Residues 118–150 are a coiled coil; it reads SKQQQQQQQQQQQQQQQQQQQQSKKKTSKDRLR. A compositionally biased stretch (low complexity) spans 120-139; sequence QQQQQQQQQQQQQQQQQQQQ. A helical membrane pass occupies residues 177–193; it reads TIASILAAIALIIYSYE. Residues 317 to 695 form the Protein kinase domain; that stretch reads DFDRLPIAAA…LIKDQMKKLG (379 aa). Residues 323–331 and Lys-345 each bind ATP; that span reads IAAASLAQV. Asp-477 (proton acceptor) is an active-site residue.

Belongs to the protein kinase superfamily. ADCK protein kinase family.

The protein resides in the membrane. The polypeptide is Probable serine/threonine-protein kinase abkD (abkD) (Dictyostelium discoideum (Social amoeba)).